Consider the following 471-residue polypeptide: 6-phosphofructo-2-kinase/fructose-2,6-bisphosphatase 1 (471 aa).

At serine 2 the chain carries N-acetylserine. The tract at residues 2–250 (SPEMGELTQT…VYYLMNIHVT (249 aa)) is 6-phosphofructo-2-kinase. Phosphoserine; by PKA is present on serine 33. 49–57 (GLPARGKTY) lines the ATP pocket. Positions 82 and 105 each coordinate beta-D-fructose 6-phosphate. Aspartate 131 is a catalytic residue. Beta-D-fructose 6-phosphate-binding residues include threonine 133 and arginine 139. At serine 141 the chain carries Phosphoserine. The active site involves cysteine 161. Residue 170–175 (NIRQVK) participates in ATP binding. Lysine 175, arginine 196, and tyrosine 200 together coordinate beta-D-fructose 6-phosphate. The tract at residues 251 to 471 (PRSIYLCRHG…EALDTVPAHY (221 aa)) is fructose-2,6-bisphosphatase. Residue arginine 258 participates in beta-D-fructose 2,6-bisphosphate binding. The Tele-phosphohistidine intermediate role is filled by histidine 259. Residues asparagine 265, glycine 271, and arginine 308 each coordinate beta-D-fructose 2,6-bisphosphate. The active-site Proton donor/acceptor is glutamate 328. Beta-D-fructose 2,6-bisphosphate contacts are provided by tyrosine 339, arginine 353, lysine 357, tyrosine 368, glutamine 394, and arginine 398. Residue 350-353 (FALR) coordinates ATP. ATP is bound by residues 394 to 398 (QAVMR) and tyrosine 430.

The protein in the C-terminal section; belongs to the phosphoglycerate mutase family. Homodimer. As to expression, liver.

The enzyme catalyses beta-D-fructose 2,6-bisphosphate + H2O = beta-D-fructose 6-phosphate + phosphate. The catalysed reaction is beta-D-fructose 6-phosphate + ATP = beta-D-fructose 2,6-bisphosphate + ADP + H(+). Its activity is regulated as follows. Phosphorylation at Ser-33 inhibits the kinase and activates the bisphosphatase. Synthesis and degradation of fructose 2,6-bisphosphate. In Homo sapiens (Human), this protein is 6-phosphofructo-2-kinase/fructose-2,6-bisphosphatase 1.